The sequence spans 107 residues: Putative double-stranded DNA mimic protein HI_1450 (107 aa).

Belongs to the putative dsDNA mimic protein family. Monomer in solution. Interacts with the DNA-binding protein HU.

In terms of biological role, may act as a double-stranded DNA (dsDNA) mimic. Probably regulates the activity of the DNA-binding protein HU. The polypeptide is Putative double-stranded DNA mimic protein HI_1450 (Haemophilus influenzae (strain ATCC 51907 / DSM 11121 / KW20 / Rd)).